The sequence spans 248 residues: tRNA N(3)-methylcytidine methyltransferase trm141 (248 aa).

Trp-23, Tyr-27, Gly-63, Asp-86, Asp-112, and Ile-133 together coordinate S-adenosyl-L-methionine.

This sequence belongs to the methyltransferase superfamily. METL family.

The protein localises to the cytoplasm. It localises to the nucleus. The catalysed reaction is cytidine(32) in tRNA(Ser) + S-adenosyl-L-methionine = N(3)-methylcytidine(32) in tRNA(Ser) + S-adenosyl-L-homocysteine + H(+). S-adenosyl-L-methionine-dependent methyltransferase that mediates N(3)-methylcytidine modification of residue 32 of the tRNA anticodon loop of tRNA(Ser). N(3)-methylcytidine methylation by trm141 requires the formation of N(6)-dimethylallyladenosine(37) (i6A37) by tit1 as prerequisite. Does not catalyze N(3)-methylcytidine modification of tRNA(Thr). The polypeptide is tRNA N(3)-methylcytidine methyltransferase trm141 (Schizosaccharomyces pombe (strain 972 / ATCC 24843) (Fission yeast)).